We begin with the raw amino-acid sequence, 270 residues long: Orotidine 5'-phosphate decarboxylase (270 aa).

Residues Asp39, 61 to 63, 93 to 102, Tyr221, and Arg239 each bind substrate; these read KTH and DRKFADIGNT. Catalysis depends on Lys95, which acts as the Proton donor.

The protein belongs to the OMP decarboxylase family.

It catalyses the reaction orotidine 5'-phosphate + H(+) = UMP + CO2. It functions in the pathway pyrimidine metabolism; UMP biosynthesis via de novo pathway; UMP from orotate: step 2/2. The protein is Orotidine 5'-phosphate decarboxylase (URA3) of Candida dubliniensis (strain CD36 / ATCC MYA-646 / CBS 7987 / NCPF 3949 / NRRL Y-17841) (Yeast).